We begin with the raw amino-acid sequence, 149 residues long: 3-hydroxyacyl-[acyl-carrier-protein] dehydratase FabZ (149 aa).

H48 is a catalytic residue.

It belongs to the thioester dehydratase family. FabZ subfamily.

The protein localises to the cytoplasm. It catalyses the reaction a (3R)-hydroxyacyl-[ACP] = a (2E)-enoyl-[ACP] + H2O. Functionally, involved in unsaturated fatty acids biosynthesis. Catalyzes the dehydration of short chain beta-hydroxyacyl-ACPs and long chain saturated and unsaturated beta-hydroxyacyl-ACPs. The sequence is that of 3-hydroxyacyl-[acyl-carrier-protein] dehydratase FabZ from Thermomicrobium roseum (strain ATCC 27502 / DSM 5159 / P-2).